Reading from the N-terminus, the 270-residue chain is Transcriptional regulator BrlR (270 aa).

Met1 is a 3',3'-c-di-GMP binding site. One can recognise an HTH merR-type domain in the interval 1–71 (MLTIGQLARI…LEAIDRLKRD (71 aa)). A DNA-binding region (H-T-H motif) is located at residues 4-23 (IGQLARIFEISTKTLRHYDA). Residues Arg31, Ser34, Asp35, Tyr40, Arg67, Arg70, Arg86, and Tyr270 each coordinate 3',3'-c-di-GMP. Positions 120 to 270 (MHARIVERPA…SQVDLYIPIY (151 aa)) are involved in effector-binding, probably including pyocyanine-binding.

As to quaternary structure, monomer. Homodimer; dimer formation enhanced in the presence of the second messenger, cyclic di-GMP (c-di-GMP). Homotetramer; dimer of dimers, arranged in a head-to-tail fashion, which may reduce DNA-binding ability. Conformational changes upon binding c-di-GMP or pyocyanine may facilitate DNA binding.

Its function is as follows. Transcriptional regulator. Responsive to the second messenger cyclic di-GMP (c-di-GMP) and to the virulence factor pyocyanine, which both enhance gene expression and promoter DNA binding of BrlR. Activates expression of operons encoding the multidrug efflux pumps MexAB-OprM and MexEF-OprN and several ABC transport systems, acting by direct binding to their respective promoters. Also acts as a repressor of the two component regulatory system, PhoPQ. Binds to promoter of its own gene. Contributes to the antimicrobial tolerance exhibited by biofilms, acting, at least in part, by activating expression of multidrug efflux pumps and ABC transporters. This is Transcriptional regulator BrlR from Pseudomonas aeruginosa (strain ATCC 15692 / DSM 22644 / CIP 104116 / JCM 14847 / LMG 12228 / 1C / PRS 101 / PAO1).